A 215-amino-acid chain; its full sequence is Putative BTB/POZ domain-containing protein At2g05330 (215 aa).

The BTB domain maps to 17-87 (SWQKIGKLTY…LYSDGSMLSS (71 aa)).

It functions in the pathway protein modification; protein ubiquitination. Functionally, may act as a substrate-specific adapter of an E3 ubiquitin-protein ligase complex (CUL3-RBX1-BTB) which mediates the ubiquitination and subsequent proteasomal degradation of target proteins. The protein is Putative BTB/POZ domain-containing protein At2g05330 of Arabidopsis thaliana (Mouse-ear cress).